Here is a 129-residue protein sequence, read N- to C-terminus: Prefoldin subunit 6 (129 aa).

A2 carries the post-translational modification N-acetylalanine. K21 carries the post-translational modification N6-acetyllysine. K66 carries the post-translational modification N6-acetyllysine; alternate. Residue K66 forms a Glycyl lysine isopeptide (Lys-Gly) (interchain with G-Cter in SUMO1); alternate linkage. K66 participates in a covalent cross-link: Glycyl lysine isopeptide (Lys-Gly) (interchain with G-Cter in SUMO2); alternate.

The protein belongs to the prefoldin subunit beta family. As to quaternary structure, heterohexamer of two PFD-alpha type and four PFD-beta type subunits. Component of the PAQosome complex which is responsible for the biogenesis of several protein complexes and which consists of R2TP complex members RUVBL1, RUVBL2, RPAP3 and PIH1D1, URI complex members PFDN2, PFDN6, PDRG1, UXT and URI1 as well as ASDURF, POLR2E and DNAAF10/WDR92.

In terms of biological role, binds specifically to cytosolic chaperonin (c-CPN) and transfers target proteins to it. Binds to nascent polypeptide chain and promotes folding in an environment in which there are many competing pathways for nonnative proteins. This Homo sapiens (Human) protein is Prefoldin subunit 6 (PFDN6).